The primary structure comprises 252 residues: uncharacterized protein (252 aa).

Positions 106-140 (IQSLHARRDHLDNAVEQLKSQLSRLDSSVAILKSQ) form a coiled coil.

This is an uncharacterized protein from Caenorhabditis elegans.